Reading from the N-terminus, the 120-residue chain is Large ribosomal subunit protein bL17 (120 aa).

The protein belongs to the bacterial ribosomal protein bL17 family. Part of the 50S ribosomal subunit. Contacts protein L32.

This Mesomycoplasma hyopneumoniae (strain 232) (Mycoplasma hyopneumoniae) protein is Large ribosomal subunit protein bL17.